A 273-amino-acid chain; its full sequence is Undecaprenyl-diphosphatase (273 aa).

7 helical membrane-spanning segments follow: residues L4–I24, K43–Y63, F82–K102, L108–A128, A183–V203, M217–I237, and I253–G273.

Belongs to the UppP family.

Its subcellular location is the cell inner membrane. It catalyses the reaction di-trans,octa-cis-undecaprenyl diphosphate + H2O = di-trans,octa-cis-undecaprenyl phosphate + phosphate + H(+). Its function is as follows. Catalyzes the dephosphorylation of undecaprenyl diphosphate (UPP). Confers resistance to bacitracin. The protein is Undecaprenyl-diphosphatase of Nitrosomonas eutropha (strain DSM 101675 / C91 / Nm57).